The sequence spans 183 residues: Shikimate kinase (183 aa).

14-19 (GAGKTT) serves as a coordination point for ATP. Thr18 is a Mg(2+) binding site. Residues Asp36, Arg60, and Gly82 each coordinate substrate. Residue Arg120 participates in ATP binding. A substrate-binding site is contributed by Arg139. Gln156 is an ATP binding site.

The protein belongs to the shikimate kinase family. Monomer. It depends on Mg(2+) as a cofactor.

It is found in the cytoplasm. The enzyme catalyses shikimate + ATP = 3-phosphoshikimate + ADP + H(+). It participates in metabolic intermediate biosynthesis; chorismate biosynthesis; chorismate from D-erythrose 4-phosphate and phosphoenolpyruvate: step 5/7. In terms of biological role, catalyzes the specific phosphorylation of the 3-hydroxyl group of shikimic acid using ATP as a cosubstrate. The chain is Shikimate kinase from Thiobacillus denitrificans (strain ATCC 25259 / T1).